The sequence spans 951 residues: Valine--tRNA ligase (951 aa).

Positions 42–52 match the 'HIGH' region motif; it reads PNVTGSLHMGH. The 'KMSKS' region motif lies at 554–558; that stretch reads KMSKS. ATP is bound at residue K557. A coiled-coil region spans residues 880–914; sequence AGLIDKAAELDRLAKEVAKLEAEIGRIESKLSNEG.

The protein belongs to the class-I aminoacyl-tRNA synthetase family. ValS type 1 subfamily. In terms of assembly, monomer.

It is found in the cytoplasm. It carries out the reaction tRNA(Val) + L-valine + ATP = L-valyl-tRNA(Val) + AMP + diphosphate. Its function is as follows. Catalyzes the attachment of valine to tRNA(Val). As ValRS can inadvertently accommodate and process structurally similar amino acids such as threonine, to avoid such errors, it has a 'posttransfer' editing activity that hydrolyzes mischarged Thr-tRNA(Val) in a tRNA-dependent manner. The protein is Valine--tRNA ligase of Pectobacterium atrosepticum (strain SCRI 1043 / ATCC BAA-672) (Erwinia carotovora subsp. atroseptica).